The chain runs to 72 residues: Seed trypsin/chymotrypsin inhibitor IVB (72 aa).

7 disulfides stabilise this stretch: C8–C61, C9–C24, C12–C57, C14–C22, C31–C38, C35–C50, and C40–C48.

It belongs to the Bowman-Birk serine protease inhibitor family. Seed.

Its function is as follows. Inhibitor of trypsin and of chymotrypsin. May function as a natural phytochemical defense against predators. This chain is Seed trypsin/chymotrypsin inhibitor IVB, found in Pisum sativum (Garden pea).